A 589-amino-acid polypeptide reads, in one-letter code: Cytoplasmic polyadenylation element-binding protein 2 (589 aa).

Disordered regions lie at residues 1–103 (MPPP…QAAA) and 118–140 (PLLK…SMSW). The segment covering 24–33 (FFPSFSPVSP) has biased composition (low complexity). Over residues 44-53 (SGGGGGGFGG) the composition is skewed to gly residues. Pro residues predominate over residues 60–81 (VPPPPPPAMNIPQQQPPPPAAP). Composition is skewed to low complexity over residues 82-103 (QQPQ…QAAA) and 130-140 (SSGWGTGSMSW). Serine 89 is modified (phosphoserine). 2 consecutive RRM domains span residues 332-423 (RKVF…PWNL) and 440-522 (KTIF…PYVL).

This sequence belongs to the RRM CPEB family. Interacts with TENT2/GLD2.

The protein resides in the cytoplasm. In terms of biological role, may play a role in translational regulation of stored mRNAs in transcriptionally inactive haploid spermatids. Binds to poly(U) RNA oligomers. Required for cell cycle progression, specifically for the transition from metaphase to anaphase. This is Cytoplasmic polyadenylation element-binding protein 2 (CPEB2) from Homo sapiens (Human).